The primary structure comprises 80 residues: uncharacterized protein (80 aa).

This is an uncharacterized protein from Shigella flexneri.